Reading from the N-terminus, the 249-residue chain is DNA repair protein RecO (249 aa).

The protein belongs to the RecO family.

Involved in DNA repair and RecF pathway recombination. In Lactobacillus delbrueckii subsp. bulgaricus (strain ATCC BAA-365 / Lb-18), this protein is DNA repair protein RecO.